Here is a 609-residue protein sequence, read N- to C-terminus: MELSETYACVPSTERGRGILISGNSKSDTILYTNGRSVVTLDLNNPLKVSIYGEHAYPATVARYSPNGEWIASGDVSGTVRIWGAYNDHVLKNEFKVLAGRIDDLQWSADGMRIVASGDGKGKSLVRAFMWDSGSNVGEFDGHSRRVLSCAIKPTRPFRIVTCGEDFLVNFYEGPPFKFKLSSREHSNFVNCVRFAPDGSKFITVSSDKKGIIYDGKTCEILGELSSDDGHKGSIYAVSWSPDGKQVLTVSADKSAKIWDISDNGSGSLNTTLNCPGSSGGVDDMLVGCLWQNDHIVTVSLGGTISIFSASDLDKSPFQFSGHMKNVSSLAVLKGNADYILSGSYDGLICKWMLGRGFCGKLQRTQNSQIKCFAAHEEEIVTSGYDNKISRISYKDDQCTNEESIDIGNQPKDLSLAPLSPDLLLVTFESGVVFLRDGKVVSTINLGFIVTALAVTPDGTEAVIGGQDGKLHLYSINGDSLTEEAVLERHRGAISVIRYSPDLSMFASADLNREAVVWDRVSREMKLKNMLYHSARINCLAWSPNSTMVATGSLDTCVIVYEVDKPASSRMTIKGAHLGGVYGLGFADDSHVVSSGEDACIRVWSFTPQ.

WD repeat units lie at residues 2-42 (ELSE…VTLD), 54-93 (EHAYPATVARYSPNGEWIASGDVSGTVRIWGAYNDHVLKN), 97-141 (VLAG…GEFD), 142-182 (GHSR…FKLS), 185-224 (EHSNFVNCVRFAPDGSKFITVSSDKKGIIYDGKTCEILGE), 230-269 (GHKGSIYAVSWSPDGKQVLTVSADKSAKIWDISDNGSGSL), 277-318 (GSSG…KSPF), 322-362 (GHMK…CGKL), 445-484 (NLGFIVTALAVTPDGTEAVIGGQDGKLHLYSINGDSLTEE), 489-528 (RHRGAISVIRYSPDLSMFASADLNREAVVWDRVSREMKLK), 532-571 (YHSARINCLAWSPNSTMVATGSLDTCVIVYEVDKPASSRM), and 576-609 (AHLGGVYGLGFADDSHVVSSGEDACIRVWSFTPQ).

As to expression, expressed in leaves, stems, flower buds and flowers.

In terms of biological role, binds actin. Enhances the F-actin depolymerization activity of actin-depolymerizing factor (ADF) proteins. The protein is Actin-interacting protein 1-2 of Arabidopsis thaliana (Mouse-ear cress).